The chain runs to 168 residues: Putative B3 domain-containing protein Os10g0158600 (168 aa).

Residues 4–97 constitute a DNA-binding region (TF-B3); that stretch reads VVFASARLNA…KARVMLLNRQ (94 aa). The segment at 105–151 is disordered; the sequence is KTPSTTSSDKNRSLSPSDQLTRASTSAHPSTSKSIPPLRNGTGSTKR. Positions 106-138 are enriched in polar residues; it reads TPSTTSSDKNRSLSPSDQLTRASTSAHPSTSKS.

It is found in the nucleus. In Oryza sativa subsp. japonica (Rice), this protein is Putative B3 domain-containing protein Os10g0158600.